Reading from the N-terminus, the 472-residue chain is MTIRTRFAPSPTGLLHVGNARAALFNFLFARHHGGEFLLRIEDTDKERSTQKAVDVIFDGLAWMGIEADAEPVFQSARQDRHTEVALELLAKGQAYKCFCTPEELTAMREKAMAEKRPPRYDGTWRDRDPSEAPEGAPYVVRLKAPREGETVIKDLVQGEVRVANAEMDDLILLRSDGTPTYLHAVVCDDHDMEITHVMRGDDHLTNTFRQAMIYRAMGWDLPHFAHLPLIHGPDGAKLSKRHGAQSVVDFREEGYLPEALCNYLLRLGWGHGDAEVLSREEQIKLFDLDGVGRSPSRMDYVKLAHLNGIWMRQADDERLTNDVMERLQGREGVVTDDKTRARILAMMPGLKERAKTLVELADNAAFAGFTLPLTFTPKAEKLLGEDGRRVLEGVGKELAALKDFTPEAIDATLRSYAEKHEIKLGSVAQPLRAAMTGSTTSPGIDLTLSALGQDEVLARIAAVLASGSANA.

A 'HIGH' region motif is present at residues 9-19 (PSPTGLLHVGN). Over residues 112 to 131 (AMAEKRPPRYDGTWRDRDPS) the composition is skewed to basic and acidic residues. Residues 112-133 (AMAEKRPPRYDGTWRDRDPSEA) form a disordered region. The short motif at 238–242 (KLSKR) is the 'KMSKS' region element. Lys-241 lines the ATP pocket.

The protein belongs to the class-I aminoacyl-tRNA synthetase family. Glutamate--tRNA ligase type 1 subfamily. In terms of assembly, monomer.

Its subcellular location is the cytoplasm. It carries out the reaction tRNA(Glu) + L-glutamate + ATP = L-glutamyl-tRNA(Glu) + AMP + diphosphate. Functionally, catalyzes the attachment of glutamate to tRNA(Glu) in a two-step reaction: glutamate is first activated by ATP to form Glu-AMP and then transferred to the acceptor end of tRNA(Glu). This chain is Glutamate--tRNA ligase 1, found in Gluconobacter oxydans (strain 621H) (Gluconobacter suboxydans).